The sequence spans 56 residues: MFIAWYWIVLIALVVVGYFLHLKRYCRAFRQDRDALLEARNKYLNSTREETAEKVE.

The chain crosses the membrane as a helical span at residues 2–22 (FIAWYWIVLIALVVVGYFLHL).

The protein localises to the cell inner membrane. The polypeptide is Protein YqiD (Escherichia coli (strain K12)).